The primary structure comprises 91 residues: ATP synthase epsilon chain (91 aa).

It belongs to the ATPase epsilon chain family. As to quaternary structure, F-type ATPases have 2 components, CF(1) - the catalytic core - and CF(0) - the membrane proton channel. CF(1) has five subunits: alpha(3), beta(3), gamma(1), delta(1), epsilon(1). CF(0) has three main subunits: a, b and c.

Its subcellular location is the cell membrane. In terms of biological role, produces ATP from ADP in the presence of a proton gradient across the membrane. This chain is ATP synthase epsilon chain (atpC), found in Micrococcus luteus (strain ATCC 4698 / DSM 20030 / JCM 1464 / CCM 169 / CCUG 5858 / IAM 1056 / NBRC 3333 / NCIMB 9278 / NCTC 2665 / VKM Ac-2230) (Micrococcus lysodeikticus).